The chain runs to 257 residues: 3-deoxy-manno-octulosonate cytidylyltransferase (257 aa).

Belongs to the KdsB family.

It localises to the cytoplasm. The catalysed reaction is 3-deoxy-alpha-D-manno-oct-2-ulosonate + CTP = CMP-3-deoxy-beta-D-manno-octulosonate + diphosphate. It functions in the pathway nucleotide-sugar biosynthesis; CMP-3-deoxy-D-manno-octulosonate biosynthesis; CMP-3-deoxy-D-manno-octulosonate from 3-deoxy-D-manno-octulosonate and CTP: step 1/1. Its pathway is bacterial outer membrane biogenesis; lipopolysaccharide biosynthesis. Functionally, activates KDO (a required 8-carbon sugar) for incorporation into bacterial lipopolysaccharide in Gram-negative bacteria. The sequence is that of 3-deoxy-manno-octulosonate cytidylyltransferase from Xylella fastidiosa (strain M23).